The primary structure comprises 609 residues: Spore-specific protein YSW1 (609 aa).

The tract at residues 1 to 24 (MSSLADTVEGSEAKRGRFSNNALT) is disordered. Residues Ser-159 and Ser-160 each carry the phosphoserine modification. A disordered region spans residues 162 to 225 (DENESHFTDA…DDEFSPATPP (64 aa)). Residues 169-179 (TDANSHVMQSK) show a composition bias toward polar residues. Basic and acidic residues predominate over residues 200–209 (LKKEYEKSFE). Positions 210-219 (EYSDDSDDEF) are enriched in acidic residues.

The polypeptide is Spore-specific protein YSW1 (YSW1) (Saccharomyces cerevisiae (strain ATCC 204508 / S288c) (Baker's yeast)).